The following is a 20-amino-acid chain: U1-poneritoxin-Ni1a (20 aa).

Lys20 is modified (lysine amide).

This sequence belongs to the non-disulfide-bridged peptide (NDBP) superfamily. Medium-length antimicrobial peptide (group 3) family. Ponericin-W subfamily. As to expression, expressed by the venom gland.

It is found in the secreted. It localises to the target cell membrane. Functionally, has activity against Gram-positive bacteria. Has insecticidal and hemolytic activities. May act by disrupting the integrity of the bacterial cell membrane. In Neoponera inversa (Ant), this protein is U1-poneritoxin-Ni1a.